Here is a 294-residue protein sequence, read N- to C-terminus: Bifunctional protein FolD (294 aa).

NADP(+) is bound by residues 164-166 (GRS), Ser193, and Ile234.

Belongs to the tetrahydrofolate dehydrogenase/cyclohydrolase family. Homodimer.

The enzyme catalyses (6R)-5,10-methylene-5,6,7,8-tetrahydrofolate + NADP(+) = (6R)-5,10-methenyltetrahydrofolate + NADPH. It carries out the reaction (6R)-5,10-methenyltetrahydrofolate + H2O = (6R)-10-formyltetrahydrofolate + H(+). Its pathway is one-carbon metabolism; tetrahydrofolate interconversion. In terms of biological role, catalyzes the oxidation of 5,10-methylenetetrahydrofolate to 5,10-methenyltetrahydrofolate and then the hydrolysis of 5,10-methenyltetrahydrofolate to 10-formyltetrahydrofolate. In Flavobacterium psychrophilum (strain ATCC 49511 / DSM 21280 / CIP 103535 / JIP02/86), this protein is Bifunctional protein FolD.